A 1366-amino-acid chain; its full sequence is DNA-directed RNA polymerase subunit beta' (1366 aa).

Residues M1–R40 are disordered. The span at K7 to K24 shows a compositional bias: basic residues. Polar residues predominate over residues Q25–S38. Residues C250, C317, C324, and C327 each coordinate Zn(2+). Residues T1299–E1366 are disordered. The span at A1353–E1366 shows a compositional bias: low complexity.

Belongs to the RNA polymerase beta' chain family. RpoC2 subfamily. In cyanobacteria the RNAP catalytic core is composed of 2 alpha, 1 beta, 1 beta', 1 gamma and 1 omega subunit. When a sigma factor is associated with the core the holoenzyme is formed, which can initiate transcription. Zn(2+) is required as a cofactor.

The catalysed reaction is RNA(n) + a ribonucleoside 5'-triphosphate = RNA(n+1) + diphosphate. Its function is as follows. DNA-dependent RNA polymerase catalyzes the transcription of DNA into RNA using the four ribonucleoside triphosphates as substrates. The polypeptide is DNA-directed RNA polymerase subunit beta' (Prochlorococcus marinus (strain MIT 9211)).